The primary structure comprises 908 residues: DNA mismatch repair protein MutS (908 aa).

An ATP-binding site is contributed by 662–669; it reads GPNMGGKS.

It belongs to the DNA mismatch repair MutS family.

Its function is as follows. This protein is involved in the repair of mismatches in DNA. It is possible that it carries out the mismatch recognition step. This protein has a weak ATPase activity. This chain is DNA mismatch repair protein MutS, found in Rhizobium etli (strain ATCC 51251 / DSM 11541 / JCM 21823 / NBRC 15573 / CFN 42).